Consider the following 277-residue polypeptide: MVVAVGLYTDIGKKTRDLLYKDYNTHQKFCLTTSSPNGVAITAAGTRKNESIFGELHTQIKNKKLTVDVKANSESDLLTTITVDEFGTPGLKSIINLVVPDQRSGKLEFQYLHEYAGVNASVGLNSNPMVNLSGAFGSKALSVGVDVSFDTATSDFTKYNAALSLTSPDLIASLHLNNHGDTLVASYYHLVKNHSGTAVGAELSHSMSRNESTLIFGSQHSLDPHTTIKTRFNNYGMASALVQHEWRPKSFVTISGDVDTKAIEKSTKVGLSLVLKH.

The protein belongs to the eukaryotic mitochondrial porin (TC 1.B.8.1) family.

It localises to the plastid outer membrane. In terms of biological role, forms a channel through the cell membrane that allows diffusion of small hydrophilic molecules. The channel adopts an open conformation at low or zero membrane potential and a closed conformation at potentials above 30-40 mV. The open state has a weak anion selectivity whereas the closed state is cation-selective. The chain is Outer plastidial membrane protein porin (POR1) from Zea mays (Maize).